A 792-amino-acid chain; its full sequence is MVLGLRSKIIPLPDHKLGNIKLGSVTNAICHRPCRVRCSHSTASSMEEAKERIRETFGKIELSPSSYDTAWVAMVPSRYSMNQPCFPQCLDWILENQREDGSWGLNPSHPLLVKDSLSSTLASLLALRKWRIGDNQVQRGLGFIETHGWAVDNKDQISPLGFEIIFPCMINYAEKLNLDLPLDPNLVNMMLCERELTIERALKNEFEGNMANVEYFAEGLGELCHWKEMMLRQRHNGSLFDSPATTAAALIYHQYDEKCFGYLNSILKLHDNWVPTICPTKIHSNLFLVDALQNLGVDRYFKTEVKRVLDEIYRLWLEKNEEIFSDVAHCAMAFRLLRMNNYEVSSEELEGFVDQEHFFTTSSGKLMNHVAILELHRASQVAIHERKDHILDKISTWTRNFMEQKLLDKHIPDRSKKEMEFAMRKFYGTFDRVETRRYIESYKMDSFKILKAAYRSSGINNIDLLKFSEHDFNLCQTRHKEELQQMKRWFTDCKLEQVGLSQQYLYTSYFIIAAILFEPEYADARLAYAKYAIIITAVDDFFDCFICKEELQNIIELVERWEGYSTVGFRSERVRIFFLALYKMVEEIAAKAETKQGRCVKDHLINLWIDMLKCMLVELDLWKIKSTTPSIEEYLSVACVTIGVPCFVLTSLYLLGPKLSKDVIESSEVSALCNCTAAVARLINDIHSYKREQAESSTNMVSILITQSQGTISEEEAIRQIKEMMESKRRELLGMVLQNKESQLPQVCKDLFWTTINAAYSIHTHGDGYRFPEEFKNHINDVIYKPLNQYSP.

Residues 1–37 constitute a chloroplast transit peptide; sequence MVLGLRSKIIPLPDHKLGNIKLGSVTNAICHRPCRVR. The Mg(2+) site is built by Asp539, Asp543, Asn684, and Glu692. Residues 539-543 carry the DDXXD motif motif; the sequence is DDFFD.

Belongs to the terpene synthase family. Mg(2+) is required as a cofactor. As to expression, expressed specifically in trichomes.

It localises to the plastid. It is found in the chloroplast. The catalysed reaction is 8-hydroxycopalyl diphosphate = cis-abienol + diphosphate. Its pathway is secondary metabolite biosynthesis; terpenoid biosynthesis. In terms of biological role, involved in the biosynthesis of cis-abienol, a labdane diterpene that can be used as synthesis precursor of ambergris substitution fragance products. The protein is Cis-abienol synthase, chloroplastic of Nicotiana tabacum (Common tobacco).